Consider the following 74-residue polypeptide: ATP synthase subunit c (74 aa).

2 helical membrane passes run 9-29 (IGAGIAVIALAGVGIGLGNIF) and 54-74 (FALTEAVALYALLIAFLILFV).

This sequence belongs to the ATPase C chain family. F-type ATPases have 2 components, F(1) - the catalytic core - and F(0) - the membrane proton channel. F(1) has five subunits: alpha(3), beta(3), gamma(1), delta(1), epsilon(1). F(0) has three main subunits: a(1), b(2) and c(10-14). The alpha and beta chains form an alternating ring which encloses part of the gamma chain. F(1) is attached to F(0) by a central stalk formed by the gamma and epsilon chains, while a peripheral stalk is formed by the delta and b chains.

It is found in the cell inner membrane. F(1)F(0) ATP synthase produces ATP from ADP in the presence of a proton or sodium gradient. F-type ATPases consist of two structural domains, F(1) containing the extramembraneous catalytic core and F(0) containing the membrane proton channel, linked together by a central stalk and a peripheral stalk. During catalysis, ATP synthesis in the catalytic domain of F(1) is coupled via a rotary mechanism of the central stalk subunits to proton translocation. Functionally, key component of the F(0) channel; it plays a direct role in translocation across the membrane. A homomeric c-ring of between 10-14 subunits forms the central stalk rotor element with the F(1) delta and epsilon subunits. This chain is ATP synthase subunit c, found in Gluconacetobacter diazotrophicus (strain ATCC 49037 / DSM 5601 / CCUG 37298 / CIP 103539 / LMG 7603 / PAl5).